A 177-amino-acid polypeptide reads, in one-letter code: MKNNTQPQSSFKKLCRKLSPKREDSAGEIQQHNSSNGEDKNRELEAVFSYMDANRDGRISPEELQKSFMTLGEQLSDEEAVAAVRLSDTDGDGMLDFEEFSQLIKVDDEEEKKMELKGAFRLYIAEGEDCITPRSLKMMLKKLGESRTTDDCRVMISAFDLNADGVLSFDEFALMMR.

Residues 1–11 (MKNNTQPQSSF) are compositionally biased toward polar residues. The interval 1–44 (MKNNTQPQSSFKKLCRKLSPKREDSAGEIQQHNSSNGEDKNREL) is disordered. EF-hand domains lie at 39–74 (DKNRELEAVFSYMDANRDGRISPEELQKSFMTLGEQ), 75–110 (LSDEEAVAAVRLSDTDGDGMLDFEEFSQLIKVDDEE), 111–146 (EKKMELKGAFRLYIAEGEDCITPRSLKMMLKKLGES), and 147–177 (RTTDDCRVMISAFDLNADGVLSFDEFALMMR). Ca(2+)-binding residues include aspartate 52, asparagine 54, aspartate 56, arginine 58, glutamate 63, aspartate 88, aspartate 90, aspartate 92, methionine 94, and glutamate 99. Residues aspartate 160, asparagine 162, aspartate 164, and glutamate 171 each contribute to the Ca(2+) site.

In terms of assembly, binds to ABCG36. As to expression, expressed in cotyledons and guard cells of young leaves. In mature root, expressed in the epidermis, trichoblasts, young lateral root and root tip. Expressed from stage 9 to 15 of flower development in anther wall.

Functionally, potential calcium sensor that binds calcium in vitro. This Arabidopsis thaliana (Mouse-ear cress) protein is Calcium-binding protein CML38.